A 1889-amino-acid polypeptide reads, in one-letter code: Protein TIC 214 (1889 aa).

The next 6 helical transmembrane spans lie at 11 to 31 (LISLYMTIINSVVMVGLYYGF), 67 to 87 (FIAGQLMMFISIYYVPLHLAL), 88 to 108 (GKPHTITVLALPYLLFHFFWN), 127 to 147 (LSIQCVFLNNLIIQLFNHFIL), 175 to 195 (VGWLIGHILLMKWVGLVLVWI), and 224 to 244 (IFSILLFITCVYYLGRIPSPI). The segment covering 255-265 (PEEVGESEEER) has biased composition (acidic residues). 2 disordered regions span residues 255 to 303 (PEEV…PSKE) and 1610 to 1633 (SNQEKDVEEDYDKSDKKKRRKKKQ). A compositionally biased stretch (polar residues) spans 279–293 (NQKQGTEENTSSSLF).

This sequence belongs to the TIC214 family. Part of the Tic complex.

It is found in the plastid. It localises to the chloroplast inner membrane. Functionally, involved in protein precursor import into chloroplasts. May be part of an intermediate translocation complex acting as a protein-conducting channel at the inner envelope. The protein is Protein TIC 214 of Gossypium barbadense (Sea Island cotton).